Reading from the N-terminus, the 397-residue chain is Kappa-carrageenase (397 aa).

The first 25 residues, 1-25 (MKPISIVAFPIPAISMLLLSAVSQA), serve as a signal peptide directing secretion. Residues 26–299 (ASMQPPIAKP…YVRTWVKVGN (274 aa)) enclose the GH16 domain. The cysteines at positions 98 and 268 are disulfide-linked. The active-site Nucleophile is the glutamate 163. The active site involves aspartate 165. The active-site Proton donor is glutamate 168. The 72-residue stretch at 316 to 387 (AVNSVQLSAA…TITVKTKNKG (72 aa)) folds into the BIG2 domain.

The protein belongs to the glycosyl hydrolase 16 family.

The protein resides in the periplasm. The enzyme catalyses Endohydrolysis of (1-&gt;4)-beta-D-linkages between D-galactose 4-sulfate and 3,6-anhydro-D-galactose in kappa-carrageenans.. The sequence is that of Kappa-carrageenase (cgkA) from Pseudoalteromonas carrageenovora (Alteromonas carrageenovora).